A 113-amino-acid polypeptide reads, in one-letter code: uncharacterized protein (113 aa).

Residues 16–70 enclose the HTH cro/C1-type domain; sequence LYEYLEPLDLKINELAELLHVHRNSVSALINNNRKLTTEMAFRLAKVFDTTVDFW. The segment at residues 27–46 is a DNA-binding region (H-T-H motif); the sequence is INELAELLHVHRNSVSALIN.

The protein belongs to the VapA/VapI family.

This is an uncharacterized protein from Escherichia coli O6:H1 (strain CFT073 / ATCC 700928 / UPEC).